A 217-amino-acid polypeptide reads, in one-letter code: D-methionine transport system permease protein MetI (217 aa).

At 1-19 the chain is on the periplasmic side; sequence MSEPMMWLLVRGVWETLAM. The 192-residue stretch at 13-204 folds into the ABC transmembrane type-1 domain; that stretch reads VWETLAMTFV…LLVILVYLIQ (192 aa). Residues 20-40 form a helical membrane-spanning segment; the sequence is TFVSGFFGFVIGLPVGVLLYV. The Cytoplasmic segment spans residues 41–57; it reads TRPGQIIANAKLYRTVS. Residues 58 to 78 form a helical membrane-spanning segment; that stretch reads AIVNIFRSIPFIILLVWMIPF. Residues 79 to 80 lie on the Periplasmic side of the membrane; that stretch reads TR. A helical transmembrane segment spans residues 81-101; it reads VIVGTSIGLQAAIVPLTVGAA. At 102 to 151 the chain is on the cytoplasmic side; the sequence is PFIARMVENALLEIPTGLIEASRAMGATPMQIVRKVLLPEALPGLVNAAT. A helical transmembrane segment spans residues 152 to 172; the sequence is ITLITLVGYSAMGGAVGAGGL. Residues 173–185 are Periplasmic-facing; the sequence is GQIGYQYGYIGYN. A helical membrane pass occupies residues 186-206; that stretch reads ATVMNTVLVLLVILVYLIQFA. At 207 to 217 the chain is on the cytoplasmic side; the sequence is GDRIVRAVTRK.

It belongs to the binding-protein-dependent transport system permease family. CysTW subfamily.

The protein resides in the cell inner membrane. In terms of biological role, part of the binding-protein-dependent transport system for D-methionine and the toxic methionine analog alpha-methyl-methionine. Probably responsible for the translocation of the substrate across the membrane. Functionally, (Microbial infection) Probably transports the toxic C-terminal region of CdiA from E.coli strain MHI813 across the inner membrane to the cytoplasm, where CdiA has a toxic effect. Toxin transport is strain-specific, mutations in this gene do not confer resistance to several other tested CdiA toxins. The chain is D-methionine transport system permease protein MetI (metI) from Escherichia coli (strain K12).